The primary structure comprises 1529 residues: Myosin-11 (1529 aa).

The Myosin N-terminal SH3-like domain maps to 11-60 (IVGSHVWIEDSDVAWIDGLVEKINGQDVEVQATNGKKITAKLSKIYPKDM). The region spanning 65–735 (GGVDDMTKLS…QMAELDARRT (671 aa)) is the Myosin motor domain. ATP is bound by residues 159–166 (GESGAGKT) and 212–220 (NNNSSRFGK). 4 actin-binding regions span residues 498 to 532 (LIEKKPGGIVALLDEACMFPKSTHETFANKLYQTF), 534 to 557 (THKRFIKPKLSRTDFAVAHYAGEV), 592 to 616 (FPPLPEETSKSSKFSSIGSRFKLQL), and 616 to 638 (LQQLMETLNSTEPHYIRCVKPNN). 6 IQ domains span residues 738–767 (LSAAAKKIQRRIRTHQAQRRFILLRKATIS), 761–790 (LRKATISLQALCRGRLSSKIFDNLRRQAAA), 786–815 (RQAAAVKIQKNARRLHSRKSYKNLHVAALV), 809–838 (LHVAALVVQTGLRAMAAHKQFRFRKQTKAA), 834–863 (QTKAATTIQAQFRCHRATLYFKKLKKGVIL), and 857–886 (LKKGVILSQTRWRGKLARRELRQLKMASRE). Residues 887–1059 (TGALKEAKDM…VLRQQAVSIA (173 aa)) are a coiled coil. The span at 993–1027 (EQEKQRADDATRKFDEAQESSEDRKKKLEDTEKKA) shows a compositional bias: basic and acidic residues. Disordered regions lie at residues 993–1031 (EQEKQRADDATRKFDEAQESSEDRKKKLEDTEKKAQQLQ) and 1096–1115 (INRRDLSEVDDKPQKSLNEK). The region spanning 1163–1472 (DRIIQTIGQA…IANMRVLMTE (310 aa)) is the Dilute domain.

This sequence belongs to the TRAFAC class myosin-kinesin ATPase superfamily. Myosin family. Plant myosin class XI subfamily. In terms of assembly, homodimer.

The protein localises to the cytoplasm. Functionally, myosin heavy chain that is required for the cell cycle-regulated transport of various organelles and proteins for their segregation. Functions by binding with its tail domain to receptor proteins on organelles and exerting force with its N-terminal motor domain against actin filaments, thereby transporting its cargo along polarized actin cables. Involved in trafficking of Golgi stacks, mitochondria and peroxisomes. This chain is Myosin-11 (XI-E), found in Arabidopsis thaliana (Mouse-ear cress).